The following is a 216-amino-acid chain: MGISSSNPFSSIFKSKAIKLLMLGLDGSGKTTILYKLMLNEVVSTISTLGYNVETIQHKHLNLTLWDLAGEERIRTLWKPFYNKCTAIIFVVDSSDRLRIDEAASELAKLMKEEELKGCSLLIFATKQDCISPMEIPELTDQLGLHDIKDRRWYVQPTRTLEGIGIYEGLDWLSTKIIEDRKSKSFKSKFSFSNKSKQQKSNSQPNTPRKNIQMMT.

The span at 188–204 shows a compositional bias: low complexity; that stretch reads SKFSFSNKSKQQKSNSQ. Residues 188 to 216 form a disordered region; sequence SKFSFSNKSKQQKSNSQPNTPRKNIQMMT. Residues 205–216 show a composition bias toward polar residues; the sequence is PNTPRKNIQMMT.

The protein belongs to the small GTPase superfamily. Arf family.

It localises to the golgi apparatus. In terms of biological role, GTP-binding protein involved in protein trafficking; may modulate vesicle budding and uncoating within the Golgi apparatus. The sequence is that of ADP-ribosylation factor D (arrD) from Dictyostelium discoideum (Social amoeba).